We begin with the raw amino-acid sequence, 753 residues long: MNRNCASPEEGGTTEQLVKEASDIVERDGFENKKKPPTLKLEHVEVVGEKSPTPATVYDLFKKYKKPDIVTNSNGDDMNVGFDQLSSDEKNGFLRKLQMLTVSSRKSVKVVGESTPSSAGRLLKKFAPSRKPTEKISVDEPPSRFNFFGRSTKKLSDSDRPSSLPKKKSARRLLFGKEEQKPEPEVVKNRVLPAMTSQQSAKGAPIPINKPYRYQGPRGSLETPTDSPAKISSNSSSSSPIPPVPTRNHFTSMNEESPSKKRTFSRQGLSNRDNLSNGSWHGELPPRDYTSPTFSRKIFVGGVPWDITEAALKDSFGEFGSCAVEWPGQEARYRSGQSNIAPLTNLRNQSKYAGQAATGYVYMIFEDERAVASLLHECSQEIGGAGEWYFKIRAQRSKSTEIRQVQIIPWVTSDSMFCEDESLLETGIEPKRTVFVGALHGMMTAQVLHWIMEDCFGSVECVQLDTDKFKYPIGSGRVTFREHGAYFKAIEMGYLHVHTSKFRKRVQIDPFLESTSCMVCTTESAQCFCRNRNCFKYYCHTCWAIDHGKDNADDVHVPVIVPSSASKAYAGPHRRPHLTSNSLSKSHGCSTNNQLSHVLSPGFPMIVGGPSQTLSALYGYIQNNQQMMLTPAVYETPMTPPSNESNAKRRSFTEFQNPAIFFNPSSMMTPQKSATCSETPVPAFFTNSAAFLTPNSNYYGSPNHSSSNISQSPQQYYGANLYYGYMPPQVAYDGSTNGSKLSPIHVPHIPNYQ.

Residues 111–286 (VGESTPSSAG…NGSWHGELPP (176 aa)) are disordered. Composition is skewed to basic and acidic residues over residues 131–142 (KPTEKISVDEPP) and 175–188 (FGKE…EVVK). Over residues 227–239 (SPAKISSNSSSSS) the composition is skewed to low complexity. Positions 265 to 279 (SRQGLSNRDNLSNGS) are enriched in polar residues. Positions 298–320 (IFVGGVPWDITEAALKDSFGEFG) constitute an RRM domain. The disordered stretch occupies residues 567 to 589 (KAYAGPHRRPHLTSNSLSKSHGC). Residues 578–589 (LTSNSLSKSHGC) are compositionally biased toward polar residues.

Cytoplasmic polyadenylation element binding protein that binds to and regulates the translation of specific mRNAs. The polypeptide is Cytoplasmic polyadenylation element-binding protein 3 (cpb-3) (Caenorhabditis briggsae).